Here is a 283-residue protein sequence, read N- to C-terminus: Polyamine aminopropyltransferase (283 aa).

One can recognise a PABS domain in the interval 5–238 (TTWIDEYQKG…GIWSWTFASK (234 aa)). Residue Q32 coordinates S-methyl-5'-thioadenosine. Positions 63 and 87 each coordinate spermidine. S-methyl-5'-thioadenosine contacts are provided by residues E107 and 139–140 (DG). The active-site Proton acceptor is the D158. 158 to 161 (DCSD) is a binding site for spermidine.

This sequence belongs to the spermidine/spermine synthase family. In terms of assembly, homodimer or homotetramer.

The protein resides in the cytoplasm. It carries out the reaction S-adenosyl 3-(methylsulfanyl)propylamine + putrescine = S-methyl-5'-thioadenosine + spermidine + H(+). It participates in amine and polyamine biosynthesis; spermidine biosynthesis; spermidine from putrescine: step 1/1. Its function is as follows. Catalyzes the irreversible transfer of a propylamine group from the amino donor S-adenosylmethioninamine (decarboxy-AdoMet) to putrescine (1,4-diaminobutane) to yield spermidine. This is Polyamine aminopropyltransferase from Prochlorococcus marinus (strain MIT 9515).